Reading from the N-terminus, the 74-residue chain is UPF0352 protein MS1910 (74 aa).

The protein belongs to the UPF0352 family.

This chain is UPF0352 protein MS1910, found in Mannheimia succiniciproducens (strain KCTC 0769BP / MBEL55E).